The chain runs to 331 residues: Ferredoxin--NADP reductase (331 aa).

7 residues coordinate FAD: Glu34, Gln42, Tyr47, Val87, Phe121, Asp285, and Thr325.

Belongs to the ferredoxin--NADP reductase type 2 family. In terms of assembly, homodimer. The cofactor is FAD.

The enzyme catalyses 2 reduced [2Fe-2S]-[ferredoxin] + NADP(+) + H(+) = 2 oxidized [2Fe-2S]-[ferredoxin] + NADPH. The sequence is that of Ferredoxin--NADP reductase from Lactiplantibacillus plantarum (strain ATCC BAA-793 / NCIMB 8826 / WCFS1) (Lactobacillus plantarum).